Reading from the N-terminus, the 108-residue chain is uncharacterized protein (108 aa).

Residue Gly-2 is the site of N-myristoyl glycine; by host attachment.

This is an uncharacterized protein from Acanthamoeba polyphaga (Amoeba).